A 305-amino-acid polypeptide reads, in one-letter code: UDP-3-O-acyl-N-acetylglucosamine deacetylase (305 aa).

Zn(2+)-binding residues include H77, H234, and D238. H261 (proton donor) is an active-site residue.

This sequence belongs to the LpxC family. Requires Zn(2+) as cofactor.

It carries out the reaction a UDP-3-O-[(3R)-3-hydroxyacyl]-N-acetyl-alpha-D-glucosamine + H2O = a UDP-3-O-[(3R)-3-hydroxyacyl]-alpha-D-glucosamine + acetate. It participates in glycolipid biosynthesis; lipid IV(A) biosynthesis; lipid IV(A) from (3R)-3-hydroxytetradecanoyl-[acyl-carrier-protein] and UDP-N-acetyl-alpha-D-glucosamine: step 2/6. In terms of biological role, catalyzes the hydrolysis of UDP-3-O-myristoyl-N-acetylglucosamine to form UDP-3-O-myristoylglucosamine and acetate, the committed step in lipid A biosynthesis. The sequence is that of UDP-3-O-acyl-N-acetylglucosamine deacetylase from Oleidesulfovibrio alaskensis (strain ATCC BAA-1058 / DSM 17464 / G20) (Desulfovibrio alaskensis).